Here is a 149-residue protein sequence, read N- to C-terminus: Large ribosomal subunit protein uL13 (149 aa).

Belongs to the universal ribosomal protein uL13 family. Part of the 50S ribosomal subunit.

Functionally, this protein is one of the early assembly proteins of the 50S ribosomal subunit, although it is not seen to bind rRNA by itself. It is important during the early stages of 50S assembly. The polypeptide is Large ribosomal subunit protein uL13 (Borrelia hermsii (strain HS1 / DAH)).